Reading from the N-terminus, the 453-residue chain is Ribulose bisphosphate carboxylase large chain (453 aa).

The propeptide occupies 1 to 2; the sequence is MS. An N-acetylproline modification is found at proline 3. An N6,N6,N6-trimethyllysine modification is found at lysine 14. Positions 123 and 173 each coordinate substrate. Lysine 175 serves as the catalytic Proton acceptor. Lysine 177 serves as a coordination point for substrate. Residues lysine 201, aspartate 203, and glutamate 204 each coordinate Mg(2+). Lysine 201 carries the post-translational modification N6-carboxylysine. Histidine 294 (proton acceptor) is an active-site residue. Positions 295, 327, and 379 each coordinate substrate.

It belongs to the RuBisCO large chain family. Type I subfamily. In terms of assembly, heterohexadecamer of 8 large chains and 8 small chains; disulfide-linked. The disulfide link is formed within the large subunit homodimers. Requires Mg(2+) as cofactor. In terms of processing, the disulfide bond which can form in the large chain dimeric partners within the hexadecamer appears to be associated with oxidative stress and protein turnover.

It localises to the plastid. Its subcellular location is the chloroplast. It carries out the reaction 2 (2R)-3-phosphoglycerate + 2 H(+) = D-ribulose 1,5-bisphosphate + CO2 + H2O. The catalysed reaction is D-ribulose 1,5-bisphosphate + O2 = 2-phosphoglycolate + (2R)-3-phosphoglycerate + 2 H(+). Its function is as follows. RuBisCO catalyzes two reactions: the carboxylation of D-ribulose 1,5-bisphosphate, the primary event in carbon dioxide fixation, as well as the oxidative fragmentation of the pentose substrate in the photorespiration process. Both reactions occur simultaneously and in competition at the same active site. The protein is Ribulose bisphosphate carboxylase large chain of Galium corsicum.